A 349-amino-acid polypeptide reads, in one-letter code: DNA polymerase IV (349 aa).

A UmuC domain is found at 3-187 (VLFVDFDYFF…LDISKVPGVG (185 aa)). Aspartate 7 and aspartate 105 together coordinate Mg(2+). The active site involves glutamate 106.

The protein belongs to the DNA polymerase type-Y family. In terms of assembly, monomer. It depends on Mg(2+) as a cofactor.

The protein resides in the cytoplasm. The catalysed reaction is DNA(n) + a 2'-deoxyribonucleoside 5'-triphosphate = DNA(n+1) + diphosphate. Functionally, poorly processive, error-prone DNA polymerase involved in untargeted mutagenesis. Copies undamaged DNA at stalled replication forks, which arise in vivo from mismatched or misaligned primer ends. These misaligned primers can be extended by PolIV. Exhibits no 3'-5' exonuclease (proofreading) activity. May be involved in translesional synthesis. The polypeptide is DNA polymerase IV (Metallosphaera sedula (strain ATCC 51363 / DSM 5348 / JCM 9185 / NBRC 15509 / TH2)).